Here is a 238-residue protein sequence, read N- to C-terminus: Ribitol-5-phosphate cytidylyltransferase 1 (238 aa).

CTP-binding positions include 7–10 (LAGG) and 81–87 (GSDRNDT).

It belongs to the IspD/TarI cytidylyltransferase family. TarI subfamily.

It catalyses the reaction D-ribitol 5-phosphate + CTP + H(+) = CDP-L-ribitol + diphosphate. It functions in the pathway cell wall biogenesis; poly(ribitol phosphate) teichoic acid biosynthesis. Catalyzes the transfer of the cytidylyl group of CTP to D-ribitol 5-phosphate. In Staphylococcus aureus (strain USA300), this protein is Ribitol-5-phosphate cytidylyltransferase 1.